Reading from the N-terminus, the 1468-residue chain is Histone-lysine N-methyltransferase, H3 lysine-4 specific (1468 aa).

A compositionally biased stretch (polar residues) spans 1–11; that stretch reads MPYSSQQNGYT. Disordered regions lie at residues 1-439, 636-737, 848-884, 986-1103, and 1141-1162; these read MPYS…RSFG, EHKL…EEYD, SAPS…RKAI, AGAH…TGEE, and PPEA…TDVP. The span at 12-26 shows a compositional bias: low complexity; it reads SASTSRLSEQTSSHS. Basic and acidic residues-rich tracts occupy residues 28–40, 46–89, 99–109, 120–136, 146–166, and 174–215; these read SSRE…EKGR, EARH…DHWR, PRDDRRDEARN, PEHS…ESAH, LDSK…DSGR, and YEYD…RDDS. Residues 225–235 are compositionally biased toward basic residues; sequence RRSRSRSRSRS. Composition is skewed to basic and acidic residues over residues 236–287 and 294–305; these read RSRD…EHST and EDSKDLRHESQR. Polar residues-rich tracts occupy residues 306–315 and 366–376; these read RVSASVQSAS and SAPNGSATAPS. Basic and acidic residues predominate over residues 396 to 405; sequence PTREKAEEAR. Low complexity predominate over residues 406–416; the sequence is TSSTRRPSSQT. The span at 417–426 shows a compositional bias: polar residues; sequence NDNVNNSRDP. 2 stretches are compositionally biased toward low complexity: residues 650-662 and 680-694; these read AAAS…PSTT and PAAP…PASA. The segment covering 713–722 has biased composition (basic and acidic residues); sequence SSYEESRKLA. The segment covering 849–861 has biased composition (polar residues); it reads APSQHAPSQQIRT. Residues 1012–1024 are compositionally biased toward basic residues; the sequence is KKKRGHTHRSKVH. Residues 1072-1085 are compositionally biased toward acidic residues; that stretch reads SDAEAGTDDVDSTE. Residues 1086-1097 are compositionally biased toward polar residues; the sequence is TDALSRSVSASV. The RxxxRR motif signature appears at 1293 to 1298; sequence RADSRR. The SET domain maps to 1327–1444; it reads KQLKFAKSPI…AGEELTYDYK (118 aa). Position 1443 (Tyr1443) interacts with S-adenosyl-L-methionine. Residues 1453–1468 form the Post-SET domain; the sequence is DAIPCLCGSPGCRRFL.

Belongs to the class V-like SAM-binding methyltransferase superfamily. In terms of assembly, component of the Set1C/COMPASS complex.

The protein localises to the nucleus. It localises to the chromosome. The enzyme catalyses L-lysyl(4)-[histone H3] + 3 S-adenosyl-L-methionine = N(6),N(6),N(6)-trimethyl-L-lysyl(4)-[histone H3] + 3 S-adenosyl-L-homocysteine + 3 H(+). The catalysed reaction is N(6)-methyl-L-lysyl(4)-[histone H3] + S-adenosyl-L-methionine = N(6),N(6)-dimethyl-L-lysyl(4)-[histone H3] + S-adenosyl-L-homocysteine + H(+). It catalyses the reaction N(6),N(6)-dimethyl-L-lysyl(4)-[histone H3] + S-adenosyl-L-methionine = N(6),N(6),N(6)-trimethyl-L-lysyl(4)-[histone H3] + S-adenosyl-L-homocysteine + H(+). Catalytic component of the COMPASS (Set1C) complex that specifically mono-, di- and trimethylates histone H3 to form H3K4me1/2/3. Binds RNAs which might negatively affect its histone methyltransferase activity. COMPASS recognizes ubiquitinated H2B on one face of the nucleosome which stimulates the methylation of H3 on the opposing face. This Mycosarcoma maydis (Corn smut fungus) protein is Histone-lysine N-methyltransferase, H3 lysine-4 specific (SET1).